The chain runs to 279 residues: Phosphate import ATP-binding protein PstB 1 (279 aa).

Residues 26 to 274 (VMDCKLDKIF…PREQLTSDYI (249 aa)) enclose the ABC transporter domain. Residue 59-66 (GPSGCGKS) participates in ATP binding.

The protein belongs to the ABC transporter superfamily. Phosphate importer (TC 3.A.1.7) family. In terms of assembly, the complex is composed of two ATP-binding proteins (PstB), two transmembrane proteins (PstC and PstA) and a solute-binding protein (PstS).

It is found in the cell inner membrane. It catalyses the reaction phosphate(out) + ATP + H2O = ADP + 2 phosphate(in) + H(+). Functionally, part of the ABC transporter complex PstSACB involved in phosphate import. Responsible for energy coupling to the transport system. In Pseudomonas putida (strain ATCC 47054 / DSM 6125 / CFBP 8728 / NCIMB 11950 / KT2440), this protein is Phosphate import ATP-binding protein PstB 1.